The chain runs to 624 residues: MSGASRSLKVDGKVLEGISRGPLPASRKVYVPGVLHPDLRVPLREISQTPTRLGHGPDAKETANPPVHVYDSSGPYTDPAAELDLRQGLPALRESWILGRNDTEALSGVSSEYGRAREADPRLAGLRFAHRRSPRVAKSGANVTQLHYARKGIITPEMEYVALRENLQVEASLAAQHPGQSWGAAIPRVITPEFVRDEIARGRAIIPANINHPELEPMIIGRNFLVKINANIGNSAVTSSIEEEVEKMVWSIRWGADTVMDLSTGRNIHETREWILRNAPVPIGTVPIYQALEKVGGKAEDLTWELYRDTLIEQCEQGVDYFTIHAGVLLRYVPWTAKRLTGIVSRGGSIMAKWCLAHHRENFLYTHFEEICEIMKAYDVSFSLGDGLRPGSIADANDAAQFGELETLGELTQIAWKHDVQVMIEGPGHVPMHLIQENMTKQLAVCGEAPFYTLGPLTTDIAPGYDHFTSGIGAAMIGWFGTAMLCYVTPKEHLGLPDRDDVKEGVITYKIAAHAADLAKGHPGAQARDNALSKARFEFRWEDQFNLSLDPERARAFHDETLPAEGAKVAHFCSMCGPQFCSMKITQEVRDFAAKQGVSDDTALQSALDEKSAEFKKAGSQLYR.

Residues asparagine 231, methionine 260, tyrosine 289, histidine 325, serine 345–glycine 347, aspartate 386–arginine 389, and glutamate 425 contribute to the substrate site. Residue histidine 429 coordinates Zn(2+). Tyrosine 452 contacts substrate. Histidine 493 is a Zn(2+) binding site. Cysteine 573, cysteine 576, and cysteine 581 together coordinate [4Fe-4S] cluster.

The protein belongs to the ThiC family. In terms of assembly, homodimer. [4Fe-4S] cluster is required as a cofactor.

The catalysed reaction is 5-amino-1-(5-phospho-beta-D-ribosyl)imidazole + S-adenosyl-L-methionine = 4-amino-2-methyl-5-(phosphooxymethyl)pyrimidine + CO + 5'-deoxyadenosine + formate + L-methionine + 3 H(+). Its pathway is cofactor biosynthesis; thiamine diphosphate biosynthesis. Its function is as follows. Catalyzes the synthesis of the hydroxymethylpyrimidine phosphate (HMP-P) moiety of thiamine from aminoimidazole ribotide (AIR) in a radical S-adenosyl-L-methionine (SAM)-dependent reaction. This chain is Phosphomethylpyrimidine synthase, found in Myxococcus xanthus (strain DK1622).